Here is a 98-residue protein sequence, read N- to C-terminus: NADH-ubiquinone oxidoreductase chain 4L (98 aa).

Helical transmembrane passes span 1 to 21 (MPSI…GTLI), 26 to 46 (LMSS…LTSL), and 61 to 81 (IILL…LVMV).

It belongs to the complex I subunit 4L family. Core subunit of respiratory chain NADH dehydrogenase (Complex I) which is composed of 45 different subunits.

It is found in the mitochondrion inner membrane. It carries out the reaction a ubiquinone + NADH + 5 H(+)(in) = a ubiquinol + NAD(+) + 4 H(+)(out). Core subunit of the mitochondrial membrane respiratory chain NADH dehydrogenase (Complex I) which catalyzes electron transfer from NADH through the respiratory chain, using ubiquinone as an electron acceptor. Part of the enzyme membrane arm which is embedded in the lipid bilayer and involved in proton translocation. The sequence is that of NADH-ubiquinone oxidoreductase chain 4L (MT-ND4L) from Otolemur crassicaudatus (Brown greater galago).